A 233-amino-acid polypeptide reads, in one-letter code: MRRFKFQYKETIVTILTENEEFYKTAVKAILEARSEIEDYILHNPDFFTSYEPIECSGGEIINRMCNAAKIAGVGPMAAVAGTIAAYAVEKMIDAGAKLAVVDNGGDIVIHSDRELLVGIYPSKLAFKVPPVDYLAICTSSGKIGHSVSFGKADAATVVARDASVADALATALGNLIGDFGKKELEKTVSEFYGKYSDFVEGILVVKDELVALAGNLPSLAFAESKEDLITKG.

Belongs to the UPF0280 family.

This chain is UPF0280 protein AF_0649, found in Archaeoglobus fulgidus (strain ATCC 49558 / DSM 4304 / JCM 9628 / NBRC 100126 / VC-16).